Reading from the N-terminus, the 553-residue chain is Phenylalanine--tRNA ligase alpha subunit (553 aa).

Positions 400 and 479 each coordinate L-phenylalanine. Glutamate 481 lines the Mg(2+) pocket.

It belongs to the class-II aminoacyl-tRNA synthetase family. Phe-tRNA synthetase alpha subunit type 2 subfamily. In terms of assembly, tetramer of two alpha and two beta subunits. Mg(2+) is required as a cofactor.

The protein resides in the cytoplasm. It catalyses the reaction tRNA(Phe) + L-phenylalanine + ATP = L-phenylalanyl-tRNA(Phe) + AMP + diphosphate + H(+). The sequence is that of Phenylalanine--tRNA ligase alpha subunit from Treponema pallidum (strain Nichols).